The chain runs to 86 residues: RNA-binding protein Hfq (86 aa).

The region spanning 9–68 is the Sm domain; it reads DPYLNTLRKEKVPVSIYLVNGIKLQGSIESFDQFVVLLKNTVSQMVYKHAISTVVPARPV. The disordered stretch occupies residues 67-86; it reads PVRLPSPTDGEHGDSEPGNA. The segment covering 75–86 has biased composition (basic and acidic residues); it reads DGEHGDSEPGNA.

This sequence belongs to the Hfq family. In terms of assembly, homohexamer.

In terms of biological role, RNA chaperone that binds small regulatory RNA (sRNAs) and mRNAs to facilitate mRNA translational regulation in response to envelope stress, environmental stress and changes in metabolite concentrations. Also binds with high specificity to tRNAs. This Pseudomonas putida (strain GB-1) protein is RNA-binding protein Hfq.